A 541-amino-acid chain; its full sequence is 2-succinyl-5-enolpyruvyl-6-hydroxy-3-cyclohexene-1-carboxylate synthase (541 aa).

It belongs to the TPP enzyme family. MenD subfamily. In terms of assembly, homodimer. Requires Mg(2+) as cofactor. The cofactor is Mn(2+). Thiamine diphosphate is required as a cofactor.

It carries out the reaction isochorismate + 2-oxoglutarate + H(+) = 5-enolpyruvoyl-6-hydroxy-2-succinyl-cyclohex-3-ene-1-carboxylate + CO2. It functions in the pathway quinol/quinone metabolism; 1,4-dihydroxy-2-naphthoate biosynthesis; 1,4-dihydroxy-2-naphthoate from chorismate: step 2/7. It participates in quinol/quinone metabolism; menaquinone biosynthesis. Catalyzes the thiamine diphosphate-dependent decarboxylation of 2-oxoglutarate and the subsequent addition of the resulting succinic semialdehyde-thiamine pyrophosphate anion to isochorismate to yield 2-succinyl-5-enolpyruvyl-6-hydroxy-3-cyclohexene-1-carboxylate (SEPHCHC). The protein is 2-succinyl-5-enolpyruvyl-6-hydroxy-3-cyclohexene-1-carboxylate synthase of Leuconostoc mesenteroides subsp. mesenteroides (strain ATCC 8293 / DSM 20343 / BCRC 11652 / CCM 1803 / JCM 6124 / NCDO 523 / NBRC 100496 / NCIMB 8023 / NCTC 12954 / NRRL B-1118 / 37Y).